The primary structure comprises 128 residues: Large ribosomal subunit protein bL12 (128 aa).

This sequence belongs to the bacterial ribosomal protein bL12 family. In terms of assembly, homodimer. Part of the ribosomal stalk of the 50S ribosomal subunit. Forms a multimeric L10(L12)X complex, where L10 forms an elongated spine to which 2 to 4 L12 dimers bind in a sequential fashion. Binds GTP-bound translation factors.

Forms part of the ribosomal stalk which helps the ribosome interact with GTP-bound translation factors. Is thus essential for accurate translation. This is Large ribosomal subunit protein bL12 from Streptomyces antibioticus.